The sequence spans 522 residues: Maturase K (522 aa).

The protein belongs to the intron maturase 2 family. MatK subfamily.

It localises to the plastid. The protein localises to the chloroplast. Its function is as follows. Usually encoded in the trnK tRNA gene intron. Probably assists in splicing its own and other chloroplast group II introns. The chain is Maturase K from Micranthus junceus (Micranthus plantagineus var. junceus).